The primary structure comprises 197 residues: Phosphoheptose isomerase (197 aa).

Residues 41–197 (VVETFRRGGK…EIVERTLFEE (157 aa)) form the SIS domain. 56-58 (NGG) provides a ligand contact to substrate. Zn(2+)-binding residues include H65 and E69. Substrate contacts are provided by residues E69, 98-99 (ND), 124-126 (STS), S129, and Q176. Residues Q176 and H184 each contribute to the Zn(2+) site.

The protein belongs to the SIS family. GmhA subfamily. Zn(2+) serves as cofactor.

It localises to the cytoplasm. The enzyme catalyses 2 D-sedoheptulose 7-phosphate = D-glycero-alpha-D-manno-heptose 7-phosphate + D-glycero-beta-D-manno-heptose 7-phosphate. The protein operates within carbohydrate biosynthesis; D-glycero-D-manno-heptose 7-phosphate biosynthesis; D-glycero-alpha-D-manno-heptose 7-phosphate and D-glycero-beta-D-manno-heptose 7-phosphate from sedoheptulose 7-phosphate: step 1/1. In terms of biological role, catalyzes the isomerization of sedoheptulose 7-phosphate in D-glycero-D-manno-heptose 7-phosphate. The sequence is that of Phosphoheptose isomerase from Roseiflexus sp. (strain RS-1).